Consider the following 332-residue polypeptide: Ribosomal RNA small subunit methyltransferase H (332 aa).

Residues 38 to 40 (GGY), Asp-56, Phe-83, Asp-104, and Gln-111 contribute to the S-adenosyl-L-methionine site. A disordered region spans residues 309 to 332 (TETPFSEDISRPDTHIPRSRRQSA).

The protein belongs to the methyltransferase superfamily. RsmH family.

The protein localises to the cytoplasm. The catalysed reaction is cytidine(1402) in 16S rRNA + S-adenosyl-L-methionine = N(4)-methylcytidine(1402) in 16S rRNA + S-adenosyl-L-homocysteine + H(+). In terms of biological role, specifically methylates the N4 position of cytidine in position 1402 (C1402) of 16S rRNA. In Zymomonas mobilis subsp. mobilis (strain ATCC 31821 / ZM4 / CP4), this protein is Ribosomal RNA small subunit methyltransferase H.